We begin with the raw amino-acid sequence, 209 residues long: Small ribosomal subunit protein uS4 (209 aa).

One can recognise an S4 RNA-binding domain in the interval 98–164 (SRLDNVVYRG…TPFIVARETA (67 aa)).

The protein belongs to the universal ribosomal protein uS4 family. Part of the 30S ribosomal subunit. Contacts protein S5. The interaction surface between S4 and S5 is involved in control of translational fidelity.

One of the primary rRNA binding proteins, it binds directly to 16S rRNA where it nucleates assembly of the body of the 30S subunit. In terms of biological role, with S5 and S12 plays an important role in translational accuracy. This Frankia alni (strain DSM 45986 / CECT 9034 / ACN14a) protein is Small ribosomal subunit protein uS4.